A 240-amino-acid polypeptide reads, in one-letter code: MDPRKVNELRAFVKMCKKDPSILHTQEMRFLREWVESMGGTATQKAKSEENTKEEKPDSKVEEDLKADEPSSEESDLEIDKEGVIEPDTDAPQEMGDENAEITEEVMDQANDKKVAAIEALNDGELQKAIDLFTDAIKLNPRLAILYAKRASVFVKLQKPNAAIRDCDRAIEINPDSAQPYKRRGKAHRLLGHWEEAAHDLALACKFDYDEDASAMLKEVQPRAQKIAEHQRKYERKREE.

Residues 38–94 (MGGTATQKAKSEENTKEEKPDSKVEEDLKADEPSSEESDLEIDKEGVIEPDTDAPQE) are disordered. Residues 46-69 (AKSEENTKEEKPDSKVEEDLKADE) are compositionally biased toward basic and acidic residues. Residues 85 to 94 (IEPDTDAPQE) show a composition bias toward acidic residues. TPR repeat units follow at residues 110–143 (ANDKKVAAIEALNDGELQKAIDLFTDAIKLNPRL), 145–177 (ILYAKRASVFVKLQKPNAAIRDCDRAIEINPDS), and 179–211 (QPYKRRGKAHRLLGHWEEAAHDLALACKFDYDE). Residues 220-240 (VQPRAQKIAEHQRKYERKREE) form a disordered region. A compositionally biased stretch (basic and acidic residues) spans 226 to 240 (KIAEHQRKYERKREE).

The protein belongs to the FAM10 family. In terms of tissue distribution, highly expressed in bone marrow and weakly in placenta, pancreas, heart and HeLa cell line.

Its subcellular location is the cytoplasm. This is Putative protein FAM10A4 (ST13P4) from Homo sapiens (Human).